Reading from the N-terminus, the 465-residue chain is Cysteine--tRNA ligase (465 aa).

Cys-29 contacts Zn(2+). Positions 31 to 41 (PTVYNYIHIGN) match the 'HIGH' region motif. Zn(2+)-binding residues include Cys-209, His-234, and Glu-238. The 'KMSKS' region motif lies at 266 to 270 (KMSKS). Lys-269 is an ATP binding site. Ser-270 is subject to Phosphoserine.

The protein belongs to the class-I aminoacyl-tRNA synthetase family. As to quaternary structure, monomer. Zn(2+) is required as a cofactor.

The protein localises to the cytoplasm. The enzyme catalyses tRNA(Cys) + L-cysteine + ATP = L-cysteinyl-tRNA(Cys) + AMP + diphosphate. In Bacillus cereus (strain AH187), this protein is Cysteine--tRNA ligase.